We begin with the raw amino-acid sequence, 43 residues long: Protein PsbN (43 aa).

The chain crosses the membrane as a helical span at residues 7-27 (IAIFISCLIVSFTGYALYTAF).

This sequence belongs to the PsbN family.

The protein localises to the plastid. Its subcellular location is the chloroplast thylakoid membrane. May play a role in photosystem I and II biogenesis. The protein is Protein PsbN of Psilotum nudum (Whisk fern).